A 133-amino-acid chain; its full sequence is Small ribosomal subunit protein uS8 (133 aa).

The protein belongs to the universal ribosomal protein uS8 family. Part of the 30S ribosomal subunit. Contacts proteins S5 and S12.

Its function is as follows. One of the primary rRNA binding proteins, it binds directly to 16S rRNA central domain where it helps coordinate assembly of the platform of the 30S subunit. In Rhodopirellula baltica (strain DSM 10527 / NCIMB 13988 / SH1), this protein is Small ribosomal subunit protein uS8.